Reading from the N-terminus, the 399-residue chain is Protein HYM1 (399 aa).

The segment covering 363 to 382 (VSNNNASSSNVASITSPSSV) has biased composition (low complexity). Residues 363–399 (VSNNNASSSNVASITSPSSVMNNQSSILTHSTSPDSR) are disordered. Residues 383–399 (MNNQSSILTHSTSPDSR) are compositionally biased toward polar residues.

This sequence belongs to the Mo25 family.

In Saccharomyces cerevisiae (strain ATCC 204508 / S288c) (Baker's yeast), this protein is Protein HYM1 (HYM1).